We begin with the raw amino-acid sequence, 324 residues long: Endochitinase A2 (324 aa).

Positions 1 to 20 are cleaved as a signal peptide; the sequence is MSKLRIPILLVLFIVSCCSA. Positions 21–61 constitute a Chitin-binding type-1 domain; sequence EQCGTQAGGALCPGGLCCSKFGWCGSTSEYCGDGCQSQCSG. 4 cysteine pairs are disulfide-bonded: Cys-23–Cys-38, Cys-32–Cys-44, Cys-37–Cys-51, and Cys-55–Cys-59. The active-site Proton donor is the Glu-133. 2 disulfides stabilise this stretch: Cys-151/Cys-170 and Cys-269/Cys-301. A propeptide spans 310-324 (removed in mature form); it reads SLPLSSILLDTVAAA.

This sequence belongs to the glycosyl hydrolase 19 family. Chitinase class I subfamily.

It catalyses the reaction Random endo-hydrolysis of N-acetyl-beta-D-glucosaminide (1-&gt;4)-beta-linkages in chitin and chitodextrins.. In terms of biological role, defense against chitin-containing fungal pathogens. This Pisum sativum (Garden pea) protein is Endochitinase A2 (CHI2).